Here is a 355-residue protein sequence, read N- to C-terminus: Fructose-1,6-bisphosphatase (355 aa).

AMP is bound by residues 25–30 (ILDQQH) and 37–41 (TGEFS). Residues Asp-78 and Glu-107 each coordinate Mg(2+). 121–122 (KY) serves as a coordination point for AMP. Residues Asp-127, Ile-129, and Asp-130 each contribute to the Mg(2+) site. 130–133 (DGSS) is a binding site for substrate. Residue Lys-149 coordinates AMP. Residues 230 to 233 (NEGN), 263 to 268 (RYIGSM), Tyr-284, and 294 to 296 (KLR) each bind substrate. Position 300 (Glu-300) interacts with Mg(2+).

Belongs to the FBPase class 1 family. Homotetramer. Mg(2+) serves as cofactor.

The enzyme catalyses beta-D-fructose 1,6-bisphosphate + H2O = beta-D-fructose 6-phosphate + phosphate. Its pathway is carbohydrate biosynthesis; gluconeogenesis. Subject to complex allosteric regulation. The enzyme can assume an active R-state, or an inactive T-state. Intermediate conformations may exist. AMP acts as allosteric inhibitor. AMP binding affects the turnover of bound substrate and not the affinity for substrate. The chain is Fructose-1,6-bisphosphatase (FBP1) from Kluyveromyces lactis (strain ATCC 8585 / CBS 2359 / DSM 70799 / NBRC 1267 / NRRL Y-1140 / WM37) (Yeast).